The primary structure comprises 370 residues: Histidinol-phosphate aminotransferase (370 aa).

K223 is modified (N6-(pyridoxal phosphate)lysine).

Belongs to the class-II pyridoxal-phosphate-dependent aminotransferase family. Histidinol-phosphate aminotransferase subfamily. Homodimer. The cofactor is pyridoxal 5'-phosphate.

The enzyme catalyses L-histidinol phosphate + 2-oxoglutarate = 3-(imidazol-4-yl)-2-oxopropyl phosphate + L-glutamate. The protein operates within amino-acid biosynthesis; L-histidine biosynthesis; L-histidine from 5-phospho-alpha-D-ribose 1-diphosphate: step 7/9. In Methylobacterium sp. (strain 4-46), this protein is Histidinol-phosphate aminotransferase.